Consider the following 855-residue polypeptide: ATP-dependent RNA helicase MAK5 (855 aa).

Disordered regions lie at residues methionine 1–leucine 43 and lysine 95–phenylalanine 167. Basic residues predominate over residues glycine 8 to lysine 33. Acidic residues predominate over residues glutamate 112–glutamate 150. Positions glutamate 219–lysine 247 match the Q motif motif. A Helicase ATP-binding domain is found at isoleucine 250 to lysine 449. Position 263-270 (alanine 263–threonine 270) interacts with ATP. The short motif at aspartate 386–aspartate 389 is the DEAD box element. Positions tyrosine 515–leucine 668 constitute a Helicase C-terminal domain. The interval aspartate 801–glutamate 855 is disordered. Residues arginine 820 to alanine 830 show a composition bias toward basic residues. Residues lysine 831–glutamate 855 are compositionally biased toward basic and acidic residues.

This sequence belongs to the DEAD box helicase family. DDX24/MAK5 subfamily.

It is found in the nucleus. It localises to the nucleolus. It catalyses the reaction ATP + H2O = ADP + phosphate + H(+). In terms of biological role, ATP-binding RNA helicase involved in the biogenesis of 60S ribosomal subunits and is required for the normal formation of 25S and 5.8S rRNAs. The polypeptide is ATP-dependent RNA helicase MAK5 (MAK5) (Lodderomyces elongisporus (strain ATCC 11503 / CBS 2605 / JCM 1781 / NBRC 1676 / NRRL YB-4239) (Yeast)).